The sequence spans 276 residues: Large ribosomal subunit protein uL2 (276 aa).

Positions 224–276 (AMNPIDHPHGGGEGKTSGGRNPVTPWGVPTKGKKTRKRNKSSNKYIKRVSDKG) are disordered. The segment covering 254 to 270 (KGKKTRKRNKSSNKYIK) has biased composition (basic residues).

The protein belongs to the universal ribosomal protein uL2 family. As to quaternary structure, part of the 50S ribosomal subunit. Forms a bridge to the 30S subunit in the 70S ribosome.

In terms of biological role, one of the primary rRNA binding proteins. Required for association of the 30S and 50S subunits to form the 70S ribosome, for tRNA binding and peptide bond formation. It has been suggested to have peptidyltransferase activity; this is somewhat controversial. Makes several contacts with the 16S rRNA in the 70S ribosome. This chain is Large ribosomal subunit protein uL2, found in Ehrlichia canis (strain Jake).